The primary structure comprises 347 residues: Phenylalanine--tRNA ligase alpha subunit (347 aa).

Residue glutamate 261 participates in Mg(2+) binding.

Belongs to the class-II aminoacyl-tRNA synthetase family. Phe-tRNA synthetase alpha subunit type 1 subfamily. Tetramer of two alpha and two beta subunits. Mg(2+) is required as a cofactor.

It is found in the cytoplasm. The catalysed reaction is tRNA(Phe) + L-phenylalanine + ATP = L-phenylalanyl-tRNA(Phe) + AMP + diphosphate + H(+). The chain is Phenylalanine--tRNA ligase alpha subunit from Streptococcus pyogenes serotype M18 (strain MGAS8232).